The sequence spans 351 residues: Ribosomal RNA large subunit methyltransferase N (351 aa).

The active-site Proton acceptor is Glu-92. In terms of domain architecture, Radical SAM core spans 105-337; it reads GHPRSTICVS…CTVRVEKGTE (233 aa). A disulfide bridge connects residues Cys-112 and Cys-342. The [4Fe-4S] cluster site is built by Cys-119, Cys-123, and Cys-126. S-adenosyl-L-methionine-binding positions include 169–170, Ser-201, 224–226, and Asn-300; these read GE and SLH. The S-methylcysteine intermediate role is filled by Cys-342.

Belongs to the radical SAM superfamily. RlmN family. Requires [4Fe-4S] cluster as cofactor.

It is found in the cytoplasm. It carries out the reaction adenosine(2503) in 23S rRNA + 2 reduced [2Fe-2S]-[ferredoxin] + 2 S-adenosyl-L-methionine = 2-methyladenosine(2503) in 23S rRNA + 5'-deoxyadenosine + L-methionine + 2 oxidized [2Fe-2S]-[ferredoxin] + S-adenosyl-L-homocysteine. Its function is as follows. Specifically methylates position 2 of adenine 2503 in 23S rRNA. In Nitrosopumilus maritimus (strain SCM1), this protein is Ribosomal RNA large subunit methyltransferase N.